Here is a 556-residue protein sequence, read N- to C-terminus: MTPTMKSIARRKALLIALSIFAVTFILWNGFPGSSNRPLPSSNDEFHYEDIELPSGYRSEGEVVDLLNPKDELEEPLFSEEPLFPVTTSIPTKTAVSKPKIAPTSAAKDVTFSSSIDSDDCSVAYDNSKPVRQYVLMIDAGSTGSRVHVYQFNNCNPSPKLEEEFFKMIEPGLSSFAGDPEGAAASLDPLLDYAMENVPEEYRRCSPIAVKATAGLRLTGESEAKAILKSVRQHLENDYPFPIVKDGVSILEGSMEGIYAWITINYLLGTLGGKATHSTVAVMDLGGASTQLVFEPRFASDGESLVDGDHKYVLDYNGEQYELYQHSHLGYGLKEARKLIHKFVLNNAEALKESLELLGDSTSIIHPCLHLNASLTHPDSKSEASEVVFVGPSLAHLSLQCRGIAEKALYKDKNCPVRPCSFNGVHQPKFTETFTDSPIYLISYFYDRMISLGMPSTFTIEDMKYLANSVCSGPTYWQDAFSLTDALKELKEEPEWCLDLNYMISLLSVGYEIPNNRQLHTAKKIDNKELGWCLGASLSMLSEQNNGWNCNVKEEI.

The Cytoplasmic portion of the chain corresponds to 1-12; it reads MTPTMKSIARRK. A helical; Signal-anchor for type II membrane protein membrane pass occupies residues 13-33; the sequence is ALLIALSIFAVTFILWNGFPG. The Lumenal segment spans residues 34 to 556; that stretch reads SSNRPLPSSN…GWNCNVKEEI (523 aa). The active-site Proton acceptor is the Glu-256. Residue Asn-372 is glycosylated (N-linked (GlcNAc...) asparagine).

It belongs to the GDA1/CD39 NTPase family. Ca(2+) serves as cofactor. The cofactor is Mn(2+).

It localises to the golgi apparatus membrane. The catalysed reaction is GDP + H2O = GMP + phosphate + H(+). It functions in the pathway protein modification; protein glycosylation. In terms of biological role, after transfer of sugars to endogenous macromolecular acceptors, the enzyme converts nucleoside diphosphates to nucleoside monophosphates which in turn exit the Golgi lumen in a coupled antiporter reaction, allowing entry of additional nucleotide sugar from the cytosol. In Schizosaccharomyces pombe (strain 972 / ATCC 24843) (Fission yeast), this protein is Guanosine-diphosphatase (gdp1).